The chain runs to 159 residues: ATP synthase subunit b (159 aa).

A helical membrane pass occupies residues 8–28; sequence ILATIINFIILILILKHFFWD.

It belongs to the ATPase B chain family. As to quaternary structure, F-type ATPases have 2 components, F(1) - the catalytic core - and F(0) - the membrane proton channel. F(1) has five subunits: alpha(3), beta(3), gamma(1), delta(1), epsilon(1). F(0) has three main subunits: a(1), b(2) and c(10-14). The alpha and beta chains form an alternating ring which encloses part of the gamma chain. F(1) is attached to F(0) by a central stalk formed by the gamma and epsilon chains, while a peripheral stalk is formed by the delta and b chains.

Its subcellular location is the cell membrane. Functionally, f(1)F(0) ATP synthase produces ATP from ADP in the presence of a proton or sodium gradient. F-type ATPases consist of two structural domains, F(1) containing the extramembraneous catalytic core and F(0) containing the membrane proton channel, linked together by a central stalk and a peripheral stalk. During catalysis, ATP synthesis in the catalytic domain of F(1) is coupled via a rotary mechanism of the central stalk subunits to proton translocation. In terms of biological role, component of the F(0) channel, it forms part of the peripheral stalk, linking F(1) to F(0). This is ATP synthase subunit b from Clostridium perfringens (strain SM101 / Type A).